Here is an 88-residue protein sequence, read N- to C-terminus: Putative membrane protein insertion efficiency factor (88 aa).

It belongs to the UPF0161 family.

It is found in the cell inner membrane. Could be involved in insertion of integral membrane proteins into the membrane. This is Putative membrane protein insertion efficiency factor from Koribacter versatilis (strain Ellin345).